Here is a 159-residue protein sequence, read N- to C-terminus: MNIIPTCQVPKDLVSAFFQKHWGSPQMVISSGIYNCDELDGYGMLNDDNQIVGLITYIFEEDACEIISLDSVIENKGIGTALLEKAEEACRERNIKQIKLITTNDNIHALAFYQKRGYRLDRLFVNAVETARKMKPEIPLLADNKIPIRDELLLVKELQ.

Positions 1-139 constitute an N-acetyltransferase domain; that stretch reads MNIIPTCQVP…TARKMKPEIP (139 aa).

This is an uncharacterized protein from Bacillus subtilis (strain 168).